A 93-amino-acid chain; its full sequence is Acylphosphatase (93 aa).

Residues 4–91 (TLHLVIHGRV…PAGTGFRVAA (88 aa)) enclose the Acylphosphatase-like domain. Residues arginine 19 and asparagine 37 contribute to the active site.

Belongs to the acylphosphatase family.

The catalysed reaction is an acyl phosphate + H2O = a carboxylate + phosphate + H(+). This Azorhizobium caulinodans (strain ATCC 43989 / DSM 5975 / JCM 20966 / LMG 6465 / NBRC 14845 / NCIMB 13405 / ORS 571) protein is Acylphosphatase (acyP).